A 508-amino-acid chain; its full sequence is MAGQRTCQRRSSRAGPGKMQEPPKSIEEFLKFQNWDYWPREIHFRDDDKWSCTLKKIKEDSSFVSIYTHLWENVPRIFEALLIMESKLKEYSLILQNHTSEIFKWKSMISETSSYRKLERYGEFLKKYHKKKKIMLSDEMETEKNIEGCSFTGFKANELTQLPRHLDAEQIYLFILKAHNFDERVFKIWKTHFLSEASIALLHDSFWWWFLHKFRPDRENQDCLFDRISESYVTLFMSIPLSRKDAFFQIYPDCLAQAIYATFHEAFPESSYLFNDEFKEDLGNNIFLWCSGLKPQKGFWIHWKLKELSTTTIHGSKKAPAKSVKERIADSQEHISTSIDFNIIKILNNPRAYTLPISKEESRLSRLATKSHYSSTGPEFNRVLFNFGGQSPLILYYLKMHELAGISKAPKKTKIKLTKIFQEPLPAPTYRDVIKEAKRQFARNQKDFRILQAKATKKPHEVKQDFEKFLHKLRSEAEIERECVASLSSSSSSSPSSTDNYNFEEEEY.

Disordered regions lie at residues 1–22 and 485–508; these read MAGQRTCQRRSSRAGPGKMQEP and ASLSSSSSSSPSSTDNYNFEEEEY. The segment covering 486-497 has biased composition (low complexity); that stretch reads SLSSSSSSSPSS.

The protein belongs to the FAM227 family.

In Homo sapiens (Human), this protein is Protein FAM227B (FAM227B).